The following is a 127-amino-acid chain: Sulfiredoxin (127 aa).

It belongs to the sulfiredoxin family. Mg(2+) is required as a cofactor. Post-translationally, forms a transient disulfide bond with TSA1 during the reduction of cysteine sulfinic acid (-SO2H).

The protein resides in the cytoplasm. Its subcellular location is the nucleus. It carries out the reaction S-hydroxy-S-oxy-L-cysteinyl-[peroxiredoxin] + [protein]-dithiol + ATP = S-hydroxy-L-cysteinyl-[peroxiredoxin] + [protein]-disulfide + ADP + phosphate. Functionally, contributes to oxidative stress resistance by reducing cysteine-sulfinic acid formed under exposure to oxidants in the peroxiredoxin TSA1. May catalyze the reduction in a multi-step process by acting both as a specific phosphotransferase and as thioltransferase. This Saccharomyces cerevisiae (strain ATCC 204508 / S288c) (Baker's yeast) protein is Sulfiredoxin.